Reading from the N-terminus, the 62-residue chain is Large ribosomal subunit protein uL30 (62 aa).

Belongs to the universal ribosomal protein uL30 family. In terms of assembly, part of the 50S ribosomal subunit.

The protein is Large ribosomal subunit protein uL30 of Roseobacter denitrificans (strain ATCC 33942 / OCh 114) (Erythrobacter sp. (strain OCh 114)).